We begin with the raw amino-acid sequence, 979 residues long: MMDGESPLRHPRISHVSNSGSDFGSSSDYNKYLVQIPPTPDNNPGPASLSIVLLEIDSNQESVPSVSGDIVSGSSGKDNEPDLTDVRINVGEEEEDDTLLSKISYSLTRVVKISPIIIALYRILIVVRVVSLALFLFWRIRNPNNKALWLWLLSVICELWFAFSWLLDQIPKLFPVNHATDIEALKATFETPNPDNPTGKSDLPGIDVFVSTADAEKEPPLVTANTILSILSVDYPVEKLSVYISDDGGSLVTFEAIAEAASFAKIWVPFCRKHKIEPRNPESYFGLKRDPYKDKVRHDFVRERRYVKRAYDEFKVRVNALPHSIRRRSDAFNSKEEIKALEKWKHWKVKVEEDQIKEPRPALVAPKATWMSDGTHWPGTWAVSGPHHSRGDHASVIQVLLDPPGDEPVEGKGGEGRALDLEGVDIRLPMLVYVSREKRPGYDHNKKAGAMNALVRASAIMSNGPFILNLDCDHYVYNSRAFRDGICFMMDHDGDRVSYVQFPQRFEGIDPSDRYANKNTVFFDINLRALDGIQGPMYVGTGCLFRRTALYGFNPPDVFVVEEEPSGSYCFPLIKKRSPATVASEPEYYTDEEDRFDIGLIRKQFGSSSMLVNSVKVAEFEGRPLATVHSSRLGRPPGSLTGSRKPLDFATVNEAVNVISCWYEDKTEWGFNVGWIYGSVTEDVVTGFRMHEKGWRSFYCVTEPDAFRGSAPINLTDRLHQVLRWATGSVEIFFSRNNAIFAGPKLKLLQRIAYLNVGIYPFTSIFILTYCFLPPLSLFSGHFVVETLTGSFLIYLLIITLSLCGLAVLEVKWSGISLEEWWRNEQFWLIGGTSAHLVAVLQGILKVIAGVEISFTLTSKSSTGGDDEDDEFADLYLFKWTALMIPPLTIIILNIVAILFAVCRTVFSANPQWSNLLGGTFFASWVLLHMYPFAKGLMGRGGKTPTVVYVWSGLIAICLSLLYITIKNSEIDGGSFMLV.

Positions 1–24 (MMDGESPLRHPRISHVSNSGSDFG) are disordered. Residues 14–24 (SHVSNSGSDFG) are compositionally biased toward low complexity. A run of 2 helical transmembrane segments spans residues 116–136 (IIIA…ALFL) and 147–167 (ALWL…SWLL). Residues Asp247 and Asp683 contribute to the active site. Helical transmembrane passes span 765 to 785 (IFIL…HFVV), 788 to 808 (LTGS…GLAV), 837 to 857 (LVAV…SFTL), 882 to 902 (ALMI…LFAV), 913 to 933 (WSNL…MYPF), and 946 to 966 (TVVY…YITI).

The protein belongs to the glycosyltransferase 2 family. Plant cellulose synthase-like D subfamily.

Its subcellular location is the golgi apparatus membrane. Its function is as follows. Thought to be a Golgi-localized beta-glycan synthase that polymerize the backbones of noncellulosic polysaccharides (hemicelluloses) of plant cell wall. The protein is Putative cellulose synthase-like protein D6 (CSLD6) of Arabidopsis thaliana (Mouse-ear cress).